The sequence spans 92 residues: UPF0235 protein CCA_00247 (92 aa).

This sequence belongs to the UPF0235 family.

In Chlamydia caviae (strain ATCC VR-813 / DSM 19441 / 03DC25 / GPIC) (Chlamydophila caviae), this protein is UPF0235 protein CCA_00247.